A 128-amino-acid chain; its full sequence is MQALLFISCGAILGASLRWAIGLLFNPLFSSFAFGALIANLLGCLIIGVLLGLFWQFPQISAEWRLFLITGFLGSLTTFSSFSSEVVELFFNDKWLNGFCVLMMHLFGCLAMTVLGIWIYKICSQLLS.

The next 4 membrane-spanning stretches (helical) occupy residues 5-25 (LFIS…GLLF), 34-54 (FGAL…LGLF), 67-87 (FLIT…SEVV), and 99-119 (FCVL…GIWI). Gly-74 and Thr-77 together coordinate Na(+).

This sequence belongs to the fluoride channel Fluc/FEX (TC 1.A.43) family.

It localises to the cell inner membrane. It carries out the reaction fluoride(in) = fluoride(out). Na(+) is not transported, but it plays an essential structural role and its presence is essential for fluoride channel function. Functionally, fluoride-specific ion channel. Important for reducing fluoride concentration in the cell, thus reducing its toxicity. The chain is Fluoride-specific ion channel FluC from Haemophilus influenzae (strain PittEE).